The following is a 250-amino-acid chain: Pyrroloquinoline-quinone synthase (250 aa).

It belongs to the PqqC family.

The catalysed reaction is 6-(2-amino-2-carboxyethyl)-7,8-dioxo-1,2,3,4,7,8-hexahydroquinoline-2,4-dicarboxylate + 3 O2 = pyrroloquinoline quinone + 2 H2O2 + 2 H2O + H(+). The protein operates within cofactor biosynthesis; pyrroloquinoline quinone biosynthesis. Its function is as follows. Ring cyclization and eight-electron oxidation of 3a-(2-amino-2-carboxyethyl)-4,5-dioxo-4,5,6,7,8,9-hexahydroquinoline-7,9-dicarboxylic-acid to PQQ. The protein is Pyrroloquinoline-quinone synthase of Xanthomonas axonopodis pv. citri (strain 306).